The chain runs to 313 residues: Porphobilinogen deaminase (313 aa).

Position 241 is an S-(dipyrrolylmethanemethyl)cysteine (Cys-241).

This sequence belongs to the HMBS family. As to quaternary structure, monomer. Requires dipyrromethane as cofactor.

The enzyme catalyses 4 porphobilinogen + H2O = hydroxymethylbilane + 4 NH4(+). It functions in the pathway porphyrin-containing compound metabolism; protoporphyrin-IX biosynthesis; coproporphyrinogen-III from 5-aminolevulinate: step 2/4. Its pathway is porphyrin-containing compound metabolism; chlorophyll biosynthesis. Tetrapolymerization of the monopyrrole PBG into the hydroxymethylbilane pre-uroporphyrinogen in several discrete steps. This Chlorobium phaeobacteroides (strain DSM 266 / SMG 266 / 2430) protein is Porphobilinogen deaminase.